A 476-amino-acid chain; its full sequence is Adenosylhomocysteinase (476 aa).

Residues Thr61, Asp140, and Glu200 each coordinate substrate. An NAD(+)-binding site is contributed by 201–203; it reads TTT. Substrate contacts are provided by Lys230 and Asp234. NAD(+)-binding positions include Asn235, 264–269, Glu287, Asn322, 343–345, and Asn389; these read GYGDVG and IGH.

Belongs to the adenosylhomocysteinase family. It depends on NAD(+) as a cofactor.

It is found in the cytoplasm. The catalysed reaction is S-adenosyl-L-homocysteine + H2O = L-homocysteine + adenosine. It functions in the pathway amino-acid biosynthesis; L-homocysteine biosynthesis; L-homocysteine from S-adenosyl-L-homocysteine: step 1/1. May play a key role in the regulation of the intracellular concentration of adenosylhomocysteine. This Acidovorax ebreus (strain TPSY) (Diaphorobacter sp. (strain TPSY)) protein is Adenosylhomocysteinase.